Here is a 305-residue protein sequence, read N- to C-terminus: tRNA-cytidine(32) 2-sulfurtransferase (305 aa).

The interval Met-1–Arg-20 is disordered. The PP-loop motif motif lies at Ser-59–Ser-64. [4Fe-4S] cluster contacts are provided by Cys-134, Cys-137, and Cys-225. Positions Asp-282–Ala-293 are enriched in low complexity. A disordered region spans residues Asp-282–Asp-305.

This sequence belongs to the TtcA family. Homodimer. Mg(2+) serves as cofactor. It depends on [4Fe-4S] cluster as a cofactor.

It localises to the cytoplasm. It carries out the reaction cytidine(32) in tRNA + S-sulfanyl-L-cysteinyl-[cysteine desulfurase] + AH2 + ATP = 2-thiocytidine(32) in tRNA + L-cysteinyl-[cysteine desulfurase] + A + AMP + diphosphate + H(+). It participates in tRNA modification. Its function is as follows. Catalyzes the ATP-dependent 2-thiolation of cytidine in position 32 of tRNA, to form 2-thiocytidine (s(2)C32). The sulfur atoms are provided by the cysteine/cysteine desulfurase (IscS) system. The polypeptide is tRNA-cytidine(32) 2-sulfurtransferase (Xanthomonas oryzae pv. oryzae (strain MAFF 311018)).